The following is a 402-amino-acid chain: Phosphoglycerate kinase (402 aa).

Residues 24 to 26 (DFN), R40, 63 to 66 (HFGR), R122, and R155 contribute to the substrate site. ATP contacts are provided by residues K206, G297, E328, and 357 to 360 (GGDS).

Belongs to the phosphoglycerate kinase family. As to quaternary structure, monomer.

Its subcellular location is the cytoplasm. The catalysed reaction is (2R)-3-phosphoglycerate + ATP = (2R)-3-phospho-glyceroyl phosphate + ADP. The protein operates within carbohydrate degradation; glycolysis; pyruvate from D-glyceraldehyde 3-phosphate: step 2/5. In Parasynechococcus marenigrum (strain WH8102), this protein is Phosphoglycerate kinase.